The sequence spans 225 residues: Insulin-induced gene 2 protein (225 aa).

Residues 1 to 28 (MAEGETESPRPKKCGPYISSVTSQSVNV) are Cytoplasmic-facing. Residues 29–51 (VIRGVVLFFIGVFLALVLNLLQI) form a helical membrane-spanning segment. Topologically, residues 52–70 (QRNVTLFPPDVITSIFSSA) are lumenal. Residues 71–88 (WWVPPCCGTASAVIGLLY) form a helical membrane-spanning segment. The Cytoplasmic portion of the chain corresponds to 89 to 103 (PCIDRHLGEPHKFKR). The chain crosses the membrane as a helical span at residues 104–126 (EWSSVMRCVAVFVGINHASAKVD). The Lumenal portion of the chain corresponds to 127-129 (FDN). A helical membrane pass occupies residues 130 to 148 (NFQFSLTLAALSVGLWWTF). The Cytoplasmic portion of the chain corresponds to 149-153 (DRSRS). S151 carries the post-translational modification Phosphoserine. A helical membrane pass occupies residues 154-175 (GFGLGVGIAFLATVVTQLLVYN). The Lumenal portion of the chain corresponds to 176–189 (GVYQYTSPDFLYVR). The chain crosses the membrane as a helical span at residues 190 to 207 (SWLPCIFFAGGITMGNIG). Topologically, residues 208-225 (RQLAMYECKVIAEKSHQE) are cytoplasmic. Position 215 is a cysteine sulfenic acid (-SOH); alternate (C215). C215 is covalently cross-linked (Glycyl cysteine thioester (Cys-Gly) (interchain with G-Cter in ubiquitin); alternate). Residues 219-225 (AEKSHQE) carry the KxHxx motif.

It belongs to the INSIG family. As to quaternary structure, interacts with SCAP; interaction is direct and only takes place in the presence of sterols; it prevents interaction between SCAP and the coat protein complex II (COPII). Associates with the SCAP-SREBP complex (composed of SCAP and SREBF1/SREBP1 or SREBF2/SREBP2); association is mediated via its interaction with SCAP and only takes place in the presence of sterols. Interacts with RNF139. Interacts with RNF145. Phosphorylation at Ser-151 by PCK1 reduces binding to oxysterol, disrupting the interaction between INSIG2 and SCAP, thereby promoting nuclear translocation of SREBP proteins (SREBF1/SREBP1 or SREBF2/SREBP2) and subsequent transcription of downstream lipogenesis-related genes. In terms of processing, polyubiquitinated by AMFR/gp78 at Cys-215 in some tissues such as adipose tissues, undifferentiated myoblasts and liver, leading to its degradation. In differentiated myotubes, Cys-215 oxidation prevents ubiquitination at the same site, resulting in protein stabilization. Post-translationally, oxidized at Cys-215 in differentiated myotubes, preventing ubiquitination at the same site, and resulting in protein stabilization. Expressed in liver, testis, kidney, spleen, intestine, brain and adrenal gland.

It localises to the endoplasmic reticulum membrane. Its function is as follows. Oxysterol-binding protein that mediates feedback control of cholesterol synthesis by controlling both endoplasmic reticulum to Golgi transport of SCAP and degradation of HMGCR. Acts as a negative regulator of cholesterol biosynthesis by mediating the retention of the SCAP-SREBP complex in the endoplasmic reticulum, thereby blocking the processing of sterol regulatory element-binding proteins (SREBPs) SREBF1/SREBP1 and SREBF2/SREBP2. Binds oxysterol, including 22-hydroxycholesterol, 24-hydroxycholesterol, 25-hydroxycholesterol and 27-hydroxycholesterol, regulating interaction with SCAP and retention of the SCAP-SREBP complex in the endoplasmic reticulum. In presence of oxysterol, interacts with SCAP, retaining the SCAP-SREBP complex in the endoplasmic reticulum, thereby preventing SCAP from escorting SREBF1/SREBP1 and SREBF2/SREBP2 to the Golgi. Sterol deprivation or phosphorylation by PCK1 reduce oxysterol-binding, disrupting the interaction between INSIG2 and SCAP, thereby promoting Golgi transport of the SCAP-SREBP complex, followed by processing and nuclear translocation of SREBF1/SREBP1 and SREBF2/SREBP2. Also regulates cholesterol synthesis by regulating degradation of HMGCR: initiates the sterol-mediated ubiquitin-mediated endoplasmic reticulum-associated degradation (ERAD) of HMGCR via recruitment of the reductase to the ubiquitin ligase RNF139. The sequence is that of Insulin-induced gene 2 protein from Mus musculus (Mouse).